The following is a 466-amino-acid chain: MAKGASISGFPEWLPSERVVEQRVIDTLRKVFELNGFIGIETRAVETGASLLKKGETSKEIYLLSRLQEVGHESDTPIEERLGLHFDLTVPLSRYVVEHSGALAFPFKRWQIQKVWRGERPQEGRFREFVQADIDVIGAGDLPDHYEVELPLVMVSALEELRAYGLPKATVHANNRKLSEGFYRGLGLTDVEGVLREIDKLDKIGADEVARLLTETCGATEAQARACLELAELTASDGAELAAKFDALCESHGIAKDSEAYTLARQGLDTLAMIVDEAAAIRPGSVIADLKIARGLDYYTGSVYETFLDGAASLGSICSGGRYDNLASQGNRKYPGVGLSIGLSRLVSYMLHAAGAHANRVSPAAVLVAVWNEEDRPAANRIANQLRARGIATDVAPTAAKLGKQIKYADKLGIPYVWFPATAAEGAEGAEPAGDEVKNIVTGEQVAADCTSWEPDTVVAQQTVEI.

Belongs to the class-II aminoacyl-tRNA synthetase family. In terms of assembly, homodimer.

Its subcellular location is the cytoplasm. The enzyme catalyses tRNA(His) + L-histidine + ATP = L-histidyl-tRNA(His) + AMP + diphosphate + H(+). The chain is Histidine--tRNA ligase from Bifidobacterium longum subsp. infantis (strain ATCC 15697 / DSM 20088 / JCM 1222 / NCTC 11817 / S12).